Here is a 93-residue protein sequence, read N- to C-terminus: YcgL domain-containing protein Ssed_2518 (93 aa).

Residues 1–85 (MICAVYKSRR…PKVNLLEQHK (85 aa)) enclose the YcgL domain.

In Shewanella sediminis (strain HAW-EB3), this protein is YcgL domain-containing protein Ssed_2518.